Consider the following 254-residue polypeptide: 3-deoxy-manno-octulosonate cytidylyltransferase (254 aa).

Belongs to the KdsB family.

The protein resides in the cytoplasm. It catalyses the reaction 3-deoxy-alpha-D-manno-oct-2-ulosonate + CTP = CMP-3-deoxy-beta-D-manno-octulosonate + diphosphate. Its pathway is nucleotide-sugar biosynthesis; CMP-3-deoxy-D-manno-octulosonate biosynthesis; CMP-3-deoxy-D-manno-octulosonate from 3-deoxy-D-manno-octulosonate and CTP: step 1/1. The protein operates within bacterial outer membrane biogenesis; lipopolysaccharide biosynthesis. In terms of biological role, activates KDO (a required 8-carbon sugar) for incorporation into bacterial lipopolysaccharide in Gram-negative bacteria. This Haemophilus influenzae (strain ATCC 51907 / DSM 11121 / KW20 / Rd) protein is 3-deoxy-manno-octulosonate cytidylyltransferase.